Reading from the N-terminus, the 239-residue chain is 1-(5-phosphoribosyl)-5-[(5-phosphoribosylamino)methylideneamino] imidazole-4-carboxamide isomerase (239 aa).

Catalysis depends on Asp8, which acts as the Proton acceptor. The active-site Proton donor is Asp129.

It belongs to the HisA/HisF family.

It is found in the cytoplasm. It catalyses the reaction 1-(5-phospho-beta-D-ribosyl)-5-[(5-phospho-beta-D-ribosylamino)methylideneamino]imidazole-4-carboxamide = 5-[(5-phospho-1-deoxy-D-ribulos-1-ylimino)methylamino]-1-(5-phospho-beta-D-ribosyl)imidazole-4-carboxamide. It functions in the pathway amino-acid biosynthesis; L-histidine biosynthesis; L-histidine from 5-phospho-alpha-D-ribose 1-diphosphate: step 4/9. The polypeptide is 1-(5-phosphoribosyl)-5-[(5-phosphoribosylamino)methylideneamino] imidazole-4-carboxamide isomerase (Paramagnetospirillum magneticum (strain ATCC 700264 / AMB-1) (Magnetospirillum magneticum)).